A 37-amino-acid polypeptide reads, in one-letter code: Large ribosomal subunit protein bL36 (37 aa).

The protein belongs to the bacterial ribosomal protein bL36 family.

In Streptomyces griseus subsp. griseus (strain JCM 4626 / CBS 651.72 / NBRC 13350 / KCC S-0626 / ISP 5235), this protein is Large ribosomal subunit protein bL36.